The sequence spans 20 residues: Apidaecin 3+ (20 aa).

Residues 1–20 form a disordered region; that stretch reads GKPSRPRPAPIQPRPPHPRL.

Belongs to the apidaecin family.

It is found in the secreted. In terms of biological role, antimicrobial peptide active against many Gram-negative enterobacterial and plant-associated bacterial species. Not active against other bacterial species like H.pylori, P.mirabilis, B.pertussis or N.gonorrhoeae. Among others, also active against S.typhi. Functionally, not active against S.typhi. The protein is Apidaecin 3+ of Pimpla disparis (Parasitic wasp).